Reading from the N-terminus, the 97-residue chain is Protein S100-A10 (97 aa).

Residues K23, K28, K54, and K57 each carry the N6-acetyllysine modification. The EF-hand domain maps to 47 to 82; the sequence is KDPLAVDKIMKDLDQCRDGKVGFQSFLSLVAGLTIA. Residues 60–71 are ancestral calcium site; the sequence is DQCRDGKVGFQS.

It belongs to the S-100 family. As to quaternary structure, heterotetramer containing 2 light chains of S100A10/p11 and 2 heavy chains of ANXA2/p36. Interacts with SCN10A. Interacts with TASOR.

Its function is as follows. Because S100A10 induces the dimerization of ANXA2/p36, it may function as a regulator of protein phosphorylation in that the ANXA2 monomer is the preferred target (in vitro) of tyrosine-specific kinase. The protein is Protein S100-A10 (S100a10) of Mus musculus (Mouse).